The sequence spans 154 residues: 6,7-dimethyl-8-ribityllumazine synthase (154 aa).

5-amino-6-(D-ribitylamino)uracil is bound by residues Phe21, 55–57, and 79–81; these read AFE and CVI. A (2S)-2-hydroxy-3-oxobutyl phosphate-binding site is contributed by 84-85; sequence AT. His87 acts as the Proton donor in catalysis. Phe111 contributes to the 5-amino-6-(D-ribitylamino)uracil binding site. (2S)-2-hydroxy-3-oxobutyl phosphate is bound at residue Arg125.

This sequence belongs to the DMRL synthase family. Forms an icosahedral capsid composed of 60 subunits, arranged as a dodecamer of pentamers.

The catalysed reaction is (2S)-2-hydroxy-3-oxobutyl phosphate + 5-amino-6-(D-ribitylamino)uracil = 6,7-dimethyl-8-(1-D-ribityl)lumazine + phosphate + 2 H2O + H(+). The protein operates within cofactor biosynthesis; riboflavin biosynthesis; riboflavin from 2-hydroxy-3-oxobutyl phosphate and 5-amino-6-(D-ribitylamino)uracil: step 1/2. Catalyzes the formation of 6,7-dimethyl-8-ribityllumazine by condensation of 5-amino-6-(D-ribitylamino)uracil with 3,4-dihydroxy-2-butanone 4-phosphate. This is the penultimate step in the biosynthesis of riboflavin. The polypeptide is 6,7-dimethyl-8-ribityllumazine synthase (Macrococcus caseolyticus (strain JCSC5402) (Macrococcoides caseolyticum)).